The chain runs to 585 residues: Arginine--tRNA ligase (585 aa).

The 'HIGH' region signature appears at 126–136 (PNIAKEMHVGH).

It belongs to the class-I aminoacyl-tRNA synthetase family. In terms of assembly, monomer.

The protein resides in the cytoplasm. The catalysed reaction is tRNA(Arg) + L-arginine + ATP = L-arginyl-tRNA(Arg) + AMP + diphosphate. The chain is Arginine--tRNA ligase from Picosynechococcus sp. (strain ATCC 27264 / PCC 7002 / PR-6) (Agmenellum quadruplicatum).